Reading from the N-terminus, the 93-residue chain is Small ribosomal subunit protein uS19 (93 aa).

Belongs to the universal ribosomal protein uS19 family.

Protein S19 forms a complex with S13 that binds strongly to the 16S ribosomal RNA. This chain is Small ribosomal subunit protein uS19, found in Desulfitobacterium hafniense (strain Y51).